A 105-amino-acid chain; its full sequence is Small ribosomal subunit protein uS10 (105 aa).

It belongs to the universal ribosomal protein uS10 family. As to quaternary structure, part of the 30S ribosomal subunit.

Functionally, involved in the binding of tRNA to the ribosomes. This chain is Small ribosomal subunit protein uS10, found in Desulfovibrio desulfuricans (strain ATCC 27774 / DSM 6949 / MB).